The primary structure comprises 503 residues: AMP phosphorylase (503 aa).

AMP-binding positions include Gly168, 194-199 (SRAITS), and Thr203. Residue Asp256 is the Proton donor of the active site. Positions 264 and 288 each coordinate AMP.

Belongs to the thymidine/pyrimidine-nucleoside phosphorylase family. Type 2 subfamily.

It catalyses the reaction AMP + phosphate = alpha-D-ribose 1,5-bisphosphate + adenine. The catalysed reaction is CMP + phosphate = cytosine + alpha-D-ribose 1,5-bisphosphate. It carries out the reaction UMP + phosphate = alpha-D-ribose 1,5-bisphosphate + uracil. In terms of biological role, catalyzes the conversion of AMP and phosphate to adenine and ribose 1,5-bisphosphate (R15P). Exhibits phosphorylase activity toward CMP and UMP in addition to AMP. Functions in an archaeal AMP degradation pathway, together with R15P isomerase and RubisCO. This is AMP phosphorylase from Methanocaldococcus jannaschii (strain ATCC 43067 / DSM 2661 / JAL-1 / JCM 10045 / NBRC 100440) (Methanococcus jannaschii).